The sequence spans 527 residues: Protein TIC 56, chloroplastic (527 aa).

The transit peptide at 1-48 directs the protein to the chloroplast; it reads MSSMNFNPFQNWFEKPPNPVPSINFVSLADSFFPKSQSPNFASIGLPK. A disordered region spans residues 43–67; sequence SIGLPKFSKKSPKPETAGTDEPGPY. Asn-350 carries the post-translational modification Deamidated asparagine. The span at 491–508 shows a compositional bias: basic and acidic residues; sequence RREEELREEDLKHYSGRT. Residues 491–527 form a disordered region; the sequence is RREEELREEDLKHYSGRTDEDEEEEEEEDDDSNSKKD. Over residues 509–521 the composition is skewed to acidic residues; it reads DEDEEEEEEEDDD.

In terms of assembly, part of the Tic complex. Component of the 1-MD complex, composed of TIC20-I, TIC214, TIC100 and TIC56. Interacts with the translocating preproteins. Hydrolysis of ATP is essential for the formation of this complex. The 1-MD complex interacts with TIC21.

The protein localises to the plastid. The protein resides in the chloroplast inner membrane. Functionally, involved in protein precursor import into chloroplasts. May be part of an intermediate translocation complex acting as a protein-conducting channel at the inner envelope. The protein is Protein TIC 56, chloroplastic of Arabidopsis thaliana (Mouse-ear cress).